Reading from the N-terminus, the 309-residue chain is tRNA uridine(34) hydroxylase (309 aa).

The region spanning 130 to 224 (SDPDTIVIDT…YLEEVPQEES (95 aa)) is the Rhodanese domain. Cys184 functions as the Cysteine persulfide intermediate in the catalytic mechanism.

The protein belongs to the TrhO family.

It carries out the reaction uridine(34) in tRNA + AH2 + O2 = 5-hydroxyuridine(34) in tRNA + A + H2O. Functionally, catalyzes oxygen-dependent 5-hydroxyuridine (ho5U) modification at position 34 in tRNAs. The protein is tRNA uridine(34) hydroxylase of Rhizobium leguminosarum bv. trifolii (strain WSM2304).